The primary structure comprises 545 residues: Glucose-6-phosphate isomerase (545 aa).

E351 acts as the Proton donor in catalysis. Residues H382 and K510 contribute to the active site.

It belongs to the GPI family.

It is found in the cytoplasm. The enzyme catalyses alpha-D-glucose 6-phosphate = beta-D-fructose 6-phosphate. It participates in carbohydrate biosynthesis; gluconeogenesis. The protein operates within carbohydrate degradation; glycolysis; D-glyceraldehyde 3-phosphate and glycerone phosphate from D-glucose: step 2/4. Its function is as follows. Catalyzes the reversible isomerization of glucose-6-phosphate to fructose-6-phosphate. This chain is Glucose-6-phosphate isomerase, found in Shewanella woodyi (strain ATCC 51908 / MS32).